The following is a 135-amino-acid chain: Protein NrdI (135 aa).

Belongs to the NrdI family.

Functionally, probably involved in ribonucleotide reductase function. The chain is Protein NrdI from Salmonella gallinarum (strain 287/91 / NCTC 13346).